The chain runs to 371 residues: UDP-N-acetylglucosamine--N-acetylmuramyl-(pentapeptide) pyrophosphoryl-undecaprenol N-acetylglucosamine transferase (371 aa).

UDP-N-acetyl-alpha-D-glucosamine-binding positions include 15-17 (TGG), Asn126, Arg172, Ser199, Ile256, 275-280 (ALTVSE), and Gln301.

This sequence belongs to the glycosyltransferase 28 family. MurG subfamily.

The protein localises to the cell inner membrane. It catalyses the reaction di-trans,octa-cis-undecaprenyl diphospho-N-acetyl-alpha-D-muramoyl-L-alanyl-D-glutamyl-meso-2,6-diaminopimeloyl-D-alanyl-D-alanine + UDP-N-acetyl-alpha-D-glucosamine = di-trans,octa-cis-undecaprenyl diphospho-[N-acetyl-alpha-D-glucosaminyl-(1-&gt;4)]-N-acetyl-alpha-D-muramoyl-L-alanyl-D-glutamyl-meso-2,6-diaminopimeloyl-D-alanyl-D-alanine + UDP + H(+). It functions in the pathway cell wall biogenesis; peptidoglycan biosynthesis. Its function is as follows. Cell wall formation. Catalyzes the transfer of a GlcNAc subunit on undecaprenyl-pyrophosphoryl-MurNAc-pentapeptide (lipid intermediate I) to form undecaprenyl-pyrophosphoryl-MurNAc-(pentapeptide)GlcNAc (lipid intermediate II). The protein is UDP-N-acetylglucosamine--N-acetylmuramyl-(pentapeptide) pyrophosphoryl-undecaprenol N-acetylglucosamine transferase of Francisella tularensis subsp. mediasiatica (strain FSC147).